A 282-amino-acid chain; its full sequence is MEMO1 family protein Cmaq_1590 (282 aa).

It belongs to the MEMO1 family.

This chain is MEMO1 family protein Cmaq_1590, found in Caldivirga maquilingensis (strain ATCC 700844 / DSM 13496 / JCM 10307 / IC-167).